Consider the following 334-residue polypeptide: MSQNRKDDHIKYALEQRPGYNSFDEMELVHRSLPKYDLAEIDLSTHFAGRDWEFPFYINAMTGGSQKGSQINEKLAQVAESCGLLFVTGSYSAALKNPSDTSYQVATGRPNLLLATNIGLDKPYQAAQQAVADLQPLFLQIHVNLMQELLMPEGEREFRSWRQHLTDYSQRLDLPLILKEVGFGMDRSTVEEARSLGIQTFDISGRGGTSFAYIENQRGGNRDYLNDWGQSTLQSLLALQPMRDEVELLASGGVRHPLDMIKALVLGAKAVGLSRAMLDLVKNYSVEEVIDIVEGWKSDLRLIMCALSCRNLQELKNVPYLLYGRLKEAQEQIK.

5-6 (RK) is a substrate binding site. Residues 60 to 62 (AMT), Ser90, and Asn117 each bind FMN. Substrate is bound at residue Gln147. Glu148 is a Mg(2+) binding site. FMN is bound by residues Lys179, Ser204, Thr209, 253-255 (GVR), and 274-275 (SR).

It belongs to the IPP isomerase type 2 family. As to quaternary structure, homooctamer. Dimer of tetramers. FMN is required as a cofactor. NADPH serves as cofactor. It depends on Mg(2+) as a cofactor.

The protein localises to the cytoplasm. The catalysed reaction is isopentenyl diphosphate = dimethylallyl diphosphate. Functionally, involved in the biosynthesis of isoprenoids. Catalyzes the 1,3-allylic rearrangement of the homoallylic substrate isopentenyl (IPP) to its allylic isomer, dimethylallyl diphosphate (DMAPP). This chain is Isopentenyl-diphosphate delta-isomerase, found in Streptococcus gordonii (strain Challis / ATCC 35105 / BCRC 15272 / CH1 / DL1 / V288).